Here is a 339-residue protein sequence, read N- to C-terminus: MASPNPAQSTTILFRRLTWQSAVTISIRLADGEPGAGNACDRYYIKAPRYSYLPLFIPEIRENLVELALDDAQLEQIDEKNWWFEEEVSEEDKQRFVRQGACRWHWPIDLVDIHSFISRPQPLPSSIELSSTPRVISLLLHLSNPPQDRLLMPNSIEVCKSQWLNQVKEADFVRWRNTNRVTNLRRVDLEAGWDGIVNNDFDLYAQMVNKIVPLPLLTSSNSTQPSRPSSADPSGPPRAPDSSYATRAIPFKIYLPDNAPVIQEIVPPISESGKPTTLLAVLQVHLPLLFPISSENPYELAFPIAQGILIPQEAEVAWIASCLCGVDGWVRVGVCLSAA.

A Glycyl lysine isopeptide (Lys-Gly) (interchain with G-Cter in ATG12) cross-link involves residue lysine 168. A compositionally biased stretch (low complexity) spans 219 to 230 (SSNSTQPSRPSS). The segment at 219 to 241 (SSNSTQPSRPSSADPSGPPRAPD) is disordered.

It belongs to the ATG5 family. In terms of assembly, conjugated with ATG12. Conjugated to ATG12; which is essential for autophagy.

It is found in the preautophagosomal structure membrane. Functionally, involved in cytoplasm to vacuole transport (Cvt) and autophagic vesicle formation. Autophagy is essential for maintenance of amino acid levels and protein synthesis under nitrogen starvation. Required for selective autophagic degradation of the nucleus (nucleophagy). Also required for mitophagy, which eliminates defective or superfluous mitochondria in order to fulfill cellular energy requirements and prevent excess ROS production. Conjugation with ATG12, through a ubiquitin-like conjugating system involving ATG7 as an E1-like activating enzyme and ATG10 as an E2-like conjugating enzyme, is essential for its function. The ATG12-ATG5 conjugate acts as an E3-like enzyme which is required for lipidation of ATG8 and ATG8 association to the vesicle membranes. The sequence is that of Autophagy protein 5 (ATG5) from Cryptococcus neoformans var. neoformans serotype D (strain B-3501A) (Filobasidiella neoformans).